Here is a 425-residue protein sequence, read N- to C-terminus: Imidazolonepropionase (425 aa).

H82 and H84 together coordinate Fe(3+). 2 residues coordinate Zn(2+): H82 and H84. The 4-imidazolone-5-propanoate site is built by R91, Y154, and H187. Y154 lines the N-formimidoyl-L-glutamate pocket. H253 is a binding site for Fe(3+). Residue H253 coordinates Zn(2+). E256 provides a ligand contact to 4-imidazolone-5-propanoate. D328 serves as a coordination point for Fe(3+). A Zn(2+)-binding site is contributed by D328. N330 and G332 together coordinate N-formimidoyl-L-glutamate. Position 333 (S333) interacts with 4-imidazolone-5-propanoate.

The protein belongs to the metallo-dependent hydrolases superfamily. HutI family. It depends on Zn(2+) as a cofactor. Fe(3+) is required as a cofactor.

It is found in the cytoplasm. It catalyses the reaction 4-imidazolone-5-propanoate + H2O = N-formimidoyl-L-glutamate. It functions in the pathway amino-acid degradation; L-histidine degradation into L-glutamate; N-formimidoyl-L-glutamate from L-histidine: step 3/3. Functionally, catalyzes the hydrolytic cleavage of the carbon-nitrogen bond in imidazolone-5-propanoate to yield N-formimidoyl-L-glutamate. It is the third step in the universal histidine degradation pathway. This is Imidazolonepropionase from Symbiobacterium thermophilum (strain DSM 24528 / JCM 14929 / IAM 14863 / T).